Here is a 459-residue protein sequence, read N- to C-terminus: Bifunctional protein GlmU (459 aa).

The segment at M1–R229 is pyrophosphorylase. UDP-N-acetyl-alpha-D-glucosamine is bound by residues L8 to G11, K22, Q72, and G77 to T78. Position 102 (D102) interacts with Mg(2+). Residues G139, E154, N169, and N227 each contribute to the UDP-N-acetyl-alpha-D-glucosamine site. N227 lines the Mg(2+) pocket. The linker stretch occupies residues V230–N250. The tract at residues G251 to Q459 is N-acetyltransferase. Residues R332 and K350 each coordinate UDP-N-acetyl-alpha-D-glucosamine. H362 (proton acceptor) is an active-site residue. Residues Y365 and N376 each contribute to the UDP-N-acetyl-alpha-D-glucosamine site. Residues A379, N385–Y386, S404, A422, and R439 each bind acetyl-CoA.

The protein in the N-terminal section; belongs to the N-acetylglucosamine-1-phosphate uridyltransferase family. It in the C-terminal section; belongs to the transferase hexapeptide repeat family. As to quaternary structure, homotrimer. The cofactor is Mg(2+).

It is found in the cytoplasm. It carries out the reaction alpha-D-glucosamine 1-phosphate + acetyl-CoA = N-acetyl-alpha-D-glucosamine 1-phosphate + CoA + H(+). The enzyme catalyses N-acetyl-alpha-D-glucosamine 1-phosphate + UTP + H(+) = UDP-N-acetyl-alpha-D-glucosamine + diphosphate. The protein operates within nucleotide-sugar biosynthesis; UDP-N-acetyl-alpha-D-glucosamine biosynthesis; N-acetyl-alpha-D-glucosamine 1-phosphate from alpha-D-glucosamine 6-phosphate (route II): step 2/2. Its pathway is nucleotide-sugar biosynthesis; UDP-N-acetyl-alpha-D-glucosamine biosynthesis; UDP-N-acetyl-alpha-D-glucosamine from N-acetyl-alpha-D-glucosamine 1-phosphate: step 1/1. It participates in bacterial outer membrane biogenesis; LPS lipid A biosynthesis. Functionally, catalyzes the last two sequential reactions in the de novo biosynthetic pathway for UDP-N-acetylglucosamine (UDP-GlcNAc). The C-terminal domain catalyzes the transfer of acetyl group from acetyl coenzyme A to glucosamine-1-phosphate (GlcN-1-P) to produce N-acetylglucosamine-1-phosphate (GlcNAc-1-P), which is converted into UDP-GlcNAc by the transfer of uridine 5-monophosphate (from uridine 5-triphosphate), a reaction catalyzed by the N-terminal domain. This Streptococcus pneumoniae (strain Taiwan19F-14) protein is Bifunctional protein GlmU.